Consider the following 1198-residue polypeptide: Fibronectin type-III domain-containing protein 3A (1198 aa).

Residues 160–221 are disordered; that stretch reads YGDVDAHSTH…PSPINEHNGL (62 aa). Residues 163 to 201 are compositionally biased toward basic and acidic residues; sequence VDAHSTHGRSNFRDERSSKTYERLQKKLKDRQGTQKDKM. Residues 202–214 are compositionally biased toward low complexity; the sequence is SSPPSSPQKCPSP. Phosphoserine occurs at positions 203, 207, and 213. 9 Fibronectin type-III domains span residues 268–369, 373–465, 469–562, 566–660, 664–757, 761–851, 861–950, 951–1045, and 1046–1151; these read NIVK…TLSC, IPNP…TSGC, MPAS…TCPD, IPVK…TPAV, PCLP…TAPG, QCKP…TPPS, EISD…TKPL, PPDP…TPKS, and VPAA…TEPP. K384 is modified (N6-acetyllysine). A helical membrane pass occupies residues 1177–1197; it reads ILVLFAFFSILIAFIIQYFVI.

It belongs to the FNDC3 family. Expressed in the odontoblast and nerves in the dental pulp. Also expressed in trachea and to a lesser extent in the brain, liver, lung and kidney.

The protein localises to the golgi apparatus membrane. Functionally, mediates spermatid-Sertoli adhesion during spermatogenesis. The protein is Fibronectin type-III domain-containing protein 3A (FNDC3A) of Homo sapiens (Human).